A 346-amino-acid chain; its full sequence is tRNA N6-adenosine threonylcarbamoyltransferase (346 aa).

The Fe cation site is built by H110 and H114. Substrate is bound by residues 132-136 (LLSGG), D165, G178, and N274. Position 298 (D298) interacts with Fe cation.

This sequence belongs to the KAE1 / TsaD family. It depends on Fe(2+) as a cofactor.

The protein localises to the cytoplasm. It carries out the reaction L-threonylcarbamoyladenylate + adenosine(37) in tRNA = N(6)-L-threonylcarbamoyladenosine(37) in tRNA + AMP + H(+). Functionally, required for the formation of a threonylcarbamoyl group on adenosine at position 37 (t(6)A37) in tRNAs that read codons beginning with adenine. Is involved in the transfer of the threonylcarbamoyl moiety of threonylcarbamoyl-AMP (TC-AMP) to the N6 group of A37, together with TsaE and TsaB. TsaD likely plays a direct catalytic role in this reaction. In Borreliella burgdorferi (strain ATCC 35210 / DSM 4680 / CIP 102532 / B31) (Borrelia burgdorferi), this protein is tRNA N6-adenosine threonylcarbamoyltransferase.